Consider the following 443-residue polypeptide: Trigger factor (443 aa).

The PPIase FKBP-type domain maps to 161–246; sequence GDKVVIDFQG…IKKIMEGKLP (86 aa).

This sequence belongs to the FKBP-type PPIase family. Tig subfamily.

It localises to the cytoplasm. The catalysed reaction is [protein]-peptidylproline (omega=180) = [protein]-peptidylproline (omega=0). Its function is as follows. Involved in protein export. Acts as a chaperone by maintaining the newly synthesized protein in an open conformation. Functions as a peptidyl-prolyl cis-trans isomerase. The polypeptide is Trigger factor (Legionella pneumophila (strain Lens)).